Here is a 180-residue protein sequence, read N- to C-terminus: Acireductone dioxygenase (180 aa).

Positions 97, 99, 103, and 141 each coordinate Fe(2+). Ni(2+)-binding residues include histidine 97, histidine 99, glutamate 103, and histidine 141.

It belongs to the acireductone dioxygenase (ARD) family. In terms of assembly, monomer. It depends on Fe(2+) as a cofactor. Ni(2+) is required as a cofactor.

It catalyses the reaction 1,2-dihydroxy-5-(methylsulfanyl)pent-1-en-3-one + O2 = 3-(methylsulfanyl)propanoate + CO + formate + 2 H(+). The catalysed reaction is 1,2-dihydroxy-5-(methylsulfanyl)pent-1-en-3-one + O2 = 4-methylsulfanyl-2-oxobutanoate + formate + 2 H(+). It functions in the pathway amino-acid biosynthesis; L-methionine biosynthesis via salvage pathway; L-methionine from S-methyl-5-thio-alpha-D-ribose 1-phosphate: step 5/6. In terms of biological role, catalyzes 2 different reactions between oxygen and the acireductone 1,2-dihydroxy-3-keto-5-methylthiopentene (DHK-MTPene) depending upon the metal bound in the active site. Fe-containing acireductone dioxygenase (Fe-ARD) produces formate and 2-keto-4-methylthiobutyrate (KMTB), the alpha-ketoacid precursor of methionine in the methionine recycle pathway. Ni-containing acireductone dioxygenase (Ni-ARD) produces methylthiopropionate, carbon monoxide and formate, and does not lie on the methionine recycle pathway. The polypeptide is Acireductone dioxygenase (Klebsiella pneumoniae subsp. pneumoniae (strain ATCC 700721 / MGH 78578)).